We begin with the raw amino-acid sequence, 539 residues long: uncharacterized protein (539 aa).

Disordered regions lie at residues 179 to 203 (SDELLPDTGEDSDEDGHNHGGHSHG) and 433 to 459 (AQASARAQARAARRGRSAAKARGHRDE). A compositionally biased stretch (acidic residues) spans 182–192 (LLPDTGEDSDE). Residues 433–442 (AQASARAQAR) show a composition bias toward low complexity. A compositionally biased stretch (basic residues) spans 443–455 (AARRGRSAAKARG).

This sequence belongs to the mycobacterial PPE family.

Its subcellular location is the secreted. This is an uncharacterized protein from Mycobacterium tuberculosis (strain CDC 1551 / Oshkosh).